The following is a 256-amino-acid chain: HTH-type transcriptional regulator PrtR (256 aa).

Residues Leu16–Leu69 form the HTH cro/C1-type domain. The segment at residues Gln27 to Ser46 is a DNA-binding region (H-T-H motif).

Functionally, represses the promoter activity of the prtN gene. This chain is HTH-type transcriptional regulator PrtR (prtR), found in Pseudomonas aeruginosa (strain ATCC 15692 / DSM 22644 / CIP 104116 / JCM 14847 / LMG 12228 / 1C / PRS 101 / PAO1).